A 413-amino-acid chain; its full sequence is MNVPHPHRPSLWLNARLATMDPAHGAPYGALEGHALLLRDGHIEAVLPQAEADAAAFDGEVFDLQGRWVTPGFVDCHTHLVYGGSRAAEWEKRLTGVPYQQIAAEGGGIVSTVRATRWLDEEELALASLPRLKALMAEGVTTVEIKSGYGLTLADELKQLAAARRLQASLPVEVATTLLAAHAVPPEYAGDADGYVDLVVESILPVAARAGLAEAVDAFCESVGFSPAQTRRVFEAARAHGLKVKGHVEQLSNLHGAELVAEFGGLSADHIEYLDDAGVAALKRAGTVAVLLPGAFYFLRETQKPPVDKLRAAGVPMAVSTDLNPGTSPFASIRLAMNQACVLFGLTPEEALAGVTRHAAQALGRGATHGRLAAGCVADLLVWDIAHPAELAYSVGVPLLKQRVFRGAAQHID.

The Fe(3+) site is built by H77 and H79. Zn(2+) is bound by residues H77 and H79. 4-imidazolone-5-propanoate is bound by residues R86, Y149, and H182. Residue Y149 coordinates N-formimidoyl-L-glutamate. H247 provides a ligand contact to Fe(3+). H247 contacts Zn(2+). Q250 contributes to the 4-imidazolone-5-propanoate binding site. A Fe(3+)-binding site is contributed by D322. D322 is a Zn(2+) binding site. The N-formimidoyl-L-glutamate site is built by N324 and G326. T327 is a binding site for 4-imidazolone-5-propanoate.

It belongs to the metallo-dependent hydrolases superfamily. HutI family. Zn(2+) serves as cofactor. Fe(3+) is required as a cofactor.

The protein resides in the cytoplasm. The enzyme catalyses 4-imidazolone-5-propanoate + H2O = N-formimidoyl-L-glutamate. Its pathway is amino-acid degradation; L-histidine degradation into L-glutamate; N-formimidoyl-L-glutamate from L-histidine: step 3/3. Catalyzes the hydrolytic cleavage of the carbon-nitrogen bond in imidazolone-5-propanoate to yield N-formimidoyl-L-glutamate. It is the third step in the universal histidine degradation pathway. The polypeptide is Imidazolonepropionase (Chromobacterium violaceum (strain ATCC 12472 / DSM 30191 / JCM 1249 / CCUG 213 / NBRC 12614 / NCIMB 9131 / NCTC 9757 / MK)).